The sequence spans 267 residues: Methylglyoxal reductase DkgB (267 aa).

Tyrosine 39 serves as the catalytic Proton donor. Histidine 97 contributes to the substrate binding site. Residue 179–231 (MTLAYGKALAEPVIKTIAEQHGATPAQVILSWAMQLGYGVIPSSTKAANLASN) coordinates NADP(+).

The protein belongs to the aldo/keto reductase family. As to quaternary structure, monomer.

It localises to the cytoplasm. It catalyses the reaction hydroxyacetone + NADP(+) = methylglyoxal + NADPH + H(+). Its function is as follows. Aldo-keto reductase that significantly contributes to cellular methylglyoxal detoxification by catalyzing the NADPH-dependent conversion of methylglyoxal to acetol. This Yersinia pestis protein is Methylglyoxal reductase DkgB.